A 111-amino-acid polypeptide reads, in one-letter code: Cytochrome b-c1 complex subunit 7 (111 aa).

Ala-2 carries the N-acetylalanine modification. At Lys-12 the chain carries N6-acetyllysine; alternate. Lys-12 bears the N6-succinyllysine; alternate mark. The residue at position 19 (Lys-19) is an N6-acetyllysine. Lys-78 bears the N6-acetyllysine; alternate mark. Lys-78 is subject to N6-succinyllysine; alternate. N6-acetyllysine occurs at positions 83 and 96.

It belongs to the UQCRB/QCR7 family. Component of the ubiquinol-cytochrome c oxidoreductase (cytochrome b-c1 complex, complex III, CIII), a multisubunit enzyme composed of 11 subunits. The complex is composed of 3 respiratory subunits cytochrome b, cytochrome c1 and Rieske protein UQCRFS1, 2 core protein subunits UQCRC1/QCR1 and UQCRC2/QCR2, and 6 low-molecular weight protein subunits UQCRH/QCR6, UQCRB/QCR7, UQCRQ/QCR8, UQCR10/QCR9, UQCR11/QCR10 and subunit 9, the cleavage product of Rieske protein UQCRFS1. The complex exists as an obligatory dimer and forms supercomplexes (SCs) in the inner mitochondrial membrane with NADH-ubiquinone oxidoreductase (complex I, CI) and cytochrome c oxidase (complex IV, CIV), resulting in different assemblies (supercomplex SCI(1)III(2)IV(1) and megacomplex MCI(2)III(2)IV(2)).

The protein resides in the mitochondrion inner membrane. Component of the ubiquinol-cytochrome c oxidoreductase, a multisubunit transmembrane complex that is part of the mitochondrial electron transport chain which drives oxidative phosphorylation. The respiratory chain contains 3 multisubunit complexes succinate dehydrogenase (complex II, CII), ubiquinol-cytochrome c oxidoreductase (cytochrome b-c1 complex, complex III, CIII) and cytochrome c oxidase (complex IV, CIV), that cooperate to transfer electrons derived from NADH and succinate to molecular oxygen, creating an electrochemical gradient over the inner membrane that drives transmembrane transport and the ATP synthase. The cytochrome b-c1 complex catalyzes electron transfer from ubiquinol to cytochrome c, linking this redox reaction to translocation of protons across the mitochondrial inner membrane, with protons being carried across the membrane as hydrogens on the quinol. In the process called Q cycle, 2 protons are consumed from the matrix, 4 protons are released into the intermembrane space and 2 electrons are passed to cytochrome c. The protein is Cytochrome b-c1 complex subunit 7 (UQCRB) of Pongo abelii (Sumatran orangutan).